The chain runs to 436 residues: Histidinol dehydrogenase (436 aa).

Substrate-binding residues include threonine 240, glutamine 262, and histidine 265. Zn(2+)-binding residues include glutamine 262 and histidine 265. Catalysis depends on proton acceptor residues glutamate 331 and histidine 332. Histidine 332, aspartate 365, glutamate 419, and histidine 424 together coordinate substrate. Aspartate 365 is a Zn(2+) binding site. Histidine 424 lines the Zn(2+) pocket.

Belongs to the histidinol dehydrogenase family. The cofactor is Zn(2+).

The catalysed reaction is L-histidinol + 2 NAD(+) + H2O = L-histidine + 2 NADH + 3 H(+). It functions in the pathway amino-acid biosynthesis; L-histidine biosynthesis; L-histidine from 5-phospho-alpha-D-ribose 1-diphosphate: step 9/9. Its function is as follows. Catalyzes the sequential NAD-dependent oxidations of L-histidinol to L-histidinaldehyde and then to L-histidine. The protein is Histidinol dehydrogenase of Leifsonia xyli subsp. xyli (strain CTCB07).